Here is a 348-residue protein sequence, read N- to C-terminus: MTGISLLWLWSKRGFIFISYVFLVCFAAVLPIDSIAQASQSSNNALNTFIVVGALVIFAVVCIILIVGRSLYFKSCLQDVPRRYIPSTAIDLPHRGSRELVTQGVEASKQLSTMFIKPKDPVIHPGVEPPERCDDPNIDKVFPEYLNYHSCIKNIADRFKYKGVFMSVDKNKLDIDSTFSDIVREKYIISNENVAVKQNAERLIELYEVLRFSGNPITREQFVYFVELCIYLVEHSLTHHIEEDLTKFPSNTMFSIGEFSTGLQASRIQSRYSAAQSFENDFGENLLNAQLSELLQNKSRIEEERLGRLRRLAGSINESEDEAISSSISRWNTSSGSITNSYSTVVRH.

The Cytoplasmic segment spans residues M1 to G14. A helical transmembrane segment spans residues F15–I35. At A36–N47 the chain is on the extracellular side. Residues T48–G68 form a helical membrane-spanning segment. Residues R69–H348 are Cytoplasmic-facing.

This sequence belongs to the DLT1 family.

The protein resides in the membrane. Its function is as follows. Required for growth under high-pressure and low-temperature conditions. The protein is Defect at low temperature protein 1 (DLT1) of Vanderwaltozyma polyspora (strain ATCC 22028 / DSM 70294 / BCRC 21397 / CBS 2163 / NBRC 10782 / NRRL Y-8283 / UCD 57-17) (Kluyveromyces polysporus).